The sequence spans 881 residues: Sodium/sulfate cotransporter 1 (881 aa).

Helical transmembrane passes span 8 to 28, 31 to 51, 61 to 81, 107 to 127, 140 to 160, and 186 to 206; these read GIVA…DWVG, ITFT…VTVA, GLLT…TGGL, MVLS…PILI, LLIP…IGTS, and IFDI…FILL. RCK C-terminal domains lie at 212 to 296, 318 to 402, 407 to 492, and 498 to 584; these read LPGN…EYGL, VFSA…IKTN, LHAV…FPGL, and EQVD…DKSF. The next 6 membrane-spanning stretches (helical) occupy residues 601–621, 625–645, 658–678, 684–704, 775–795, and 803–823; these read MIIG…GGLK, YIHL…TGCM, VYLT…TGVA, AIIS…AIYI, FAIV…FILV, and VWIV…LYFL. A disordered region spans residues 854–881; it reads SLRRQVSHTRTDDSGSSGSPLPAPKIVA.

It belongs to the divalent anion:Na+ symporter (DASS) superfamily. Na+/sulfate symporter (TC 2.A.47.4) family.

It localises to the cell membrane. Functionally, na(+)/sulfate cotransporter with a probable high-affinity for sulfate and a proteasome dependent turnover. The sequence is that of Sodium/sulfate cotransporter 1 (SLT1) from Chlamydomonas reinhardtii (Chlamydomonas smithii).